The following is a 687-amino-acid chain: Glycine--tRNA ligase beta subunit (687 aa).

Belongs to the class-II aminoacyl-tRNA synthetase family. As to quaternary structure, tetramer of two alpha and two beta subunits.

It localises to the cytoplasm. The enzyme catalyses tRNA(Gly) + glycine + ATP = glycyl-tRNA(Gly) + AMP + diphosphate. In Ruegeria sp. (strain TM1040) (Silicibacter sp.), this protein is Glycine--tRNA ligase beta subunit.